Here is a 154-residue protein sequence, read N- to C-terminus: Ribonuclease K6 (154 aa).

The first 27 residues, M1–A27, serve as a signal peptide directing secretion. Catalysis depends on H42, which acts as the Proton acceptor. Disulfide bonds link C50/C108, C64/C118, C82/C133, and C89/C96. The N-linked (GlcNAc...) asparagine glycan is linked to N59. Substrate is bound by residues K65–T69 and K90. N104 is a glycosylation site (N-linked (GlcNAc...) asparagine). H149 (proton donor) is an active-site residue.

It belongs to the pancreatic ribonuclease family. In terms of assembly, interacts (via N-terminus) with bacterial lipopolysaccharide (LPS). As to expression, kidney (at protein level).

It is found in the secreted. Its subcellular location is the lysosome. It localises to the cytoplasmic granule. Its function is as follows. Ribonuclease which shows a preference for the pyrimidines uridine and cytosine. Has potent antimicrobial activity against a range of Gram-positive and Gram-negative bacteria, including P.aeruginosa, A.baumanii, M.luteus, S.aureus, E.faecalis, E.faecium, S.saprophyticus and E.coli. Causes loss of bacterial membrane integrity, and also promotes agglutination of Gram-negative bacteria. Probably contributes to urinary tract sterility. Bactericidal activity is independent of RNase activity. The polypeptide is Ribonuclease K6 (RNASE6) (Bos taurus (Bovine)).